The chain runs to 145 residues: Transcription antitermination protein NusB (145 aa).

It belongs to the NusB family.

In terms of biological role, involved in transcription antitermination. Required for transcription of ribosomal RNA (rRNA) genes. Binds specifically to the boxA antiterminator sequence of the ribosomal RNA (rrn) operons. The chain is Transcription antitermination protein NusB from Geotalea uraniireducens (strain Rf4) (Geobacter uraniireducens).